The chain runs to 726 residues: Probable dipeptidyl-peptidase 5 (726 aa).

Positions 1 to 19 (MAAAKWLIASLAFASSGLA) are cleaved as a signal peptide. N-linked (GlcNAc...) asparagine glycosylation is found at N96 and N252. A disordered region spans residues 269-291 (AEPINKRNGPRTPQGIEGASSSP). The active-site Charge relay system is S558. A glycan (N-linked (GlcNAc...) asparagine) is linked at N605. Active-site charge relay system residues include D641 and H673. A glycan (N-linked (GlcNAc...) asparagine) is linked at N699.

Belongs to the peptidase S9C family.

Its subcellular location is the secreted. Functionally, extracellular dipeptidyl-peptidase which removes N-terminal dipeptides sequentially from polypeptides having unsubstituted N-termini. Contributes to pathogenicity. This chain is Probable dipeptidyl-peptidase 5 (DPP5), found in Trichophyton verrucosum (strain HKI 0517).